The primary structure comprises 616 residues: Probable galacturonosyltransferase 4 (616 aa).

At 1 to 6 (MMVKLR) the chain is on the cytoplasmic side. A helical; Signal-anchor for type II membrane protein membrane pass occupies residues 7 to 29 (NLVLFFMLLTVVAHILLYTDPAA). The Lumenal portion of the chain corresponds to 30-616 (SFKTPFSKRD…VYLRECNINP (587 aa)). Residues 132–152 (QTSEKVDEQPEPNAFGAKKDT) are disordered. N-linked (GlcNAc...) asparagine glycans are attached at residues Asn291, Asn326, Asn378, Asn481, and Asn514.

The protein belongs to the glycosyltransferase 8 family. Expressed in roots, inflorescences, siliques, leaves and stems.

The protein resides in the golgi apparatus membrane. The protein operates within glycan metabolism; pectin biosynthesis. In terms of biological role, may be involved in pectin and/or xylans biosynthesis in cell walls. In Arabidopsis thaliana (Mouse-ear cress), this protein is Probable galacturonosyltransferase 4 (GAUT4).